A 570-amino-acid chain; its full sequence is Conserved oligomeric Golgi complex subunit 8 (570 aa).

It belongs to the COG8 family. As to quaternary structure, component of the conserved oligomeric Golgi complex which is composed of eight different subunits and is required for normal Golgi morphology and localization.

It is found in the golgi apparatus membrane. In terms of biological role, required for normal Golgi function. This chain is Conserved oligomeric Golgi complex subunit 8, found in Drosophila melanogaster (Fruit fly).